Consider the following 235-residue polypeptide: Probable tetraspanin tspB (235 aa).

The Cytoplasmic portion of the chain corresponds to 1-23 (MVDTTNLIPNTPRYLKVPLIAFN). The helical transmembrane segment at 24–44 (TILWVLGLVLVIIGSIGVSFF) threads the bilayer. Over 45 to 68 (SNFKDFTKVSKASAALSNLTTGAP) the chain is Extracellular. Asn62 carries an N-linked (GlcNAc...) asparagine glycan. The chain crosses the membrane as a helical span at residues 69–89 (AGVLVIGIFFVILTVIGCFVA). At 90 to 93 (GKEK) the chain is on the cytoplasmic side. A helical membrane pass occupies residues 94–114 (LVGLVIYTMLMLIILVALIGV). Over 115 to 200 (GGKALTLHND…ISSNLYLVGA (86 aa)) the chain is Extracellular. Asn143 and Asn159 each carry an N-linked (GlcNAc...) asparagine glycan. A helical transmembrane segment spans residues 201–221 (AAVSIGVIEFICMLFALFLII). Residues 222–235 (RICRAPRTKSYDYQ) are Cytoplasmic-facing.

Belongs to the tetraspanin (TM4SF) family.

The protein resides in the membrane. This is Probable tetraspanin tspB (tspB) from Dictyostelium discoideum (Social amoeba).